Consider the following 269-residue polypeptide: NAD kinase (269 aa).

Catalysis depends on Asp-45, which acts as the Proton acceptor. Residues 45-46 (DG), 122-123 (NE), Arg-149, Asp-151, and Ala-186 each bind NAD(+).

It belongs to the NAD kinase family. It depends on a divalent metal cation as a cofactor.

The protein localises to the cytoplasm. It carries out the reaction NAD(+) + ATP = ADP + NADP(+) + H(+). Functionally, involved in the regulation of the intracellular balance of NAD and NADP, and is a key enzyme in the biosynthesis of NADP. Catalyzes specifically the phosphorylation on 2'-hydroxyl of the adenosine moiety of NAD to yield NADP. The sequence is that of NAD kinase from Staphylococcus carnosus (strain TM300).